A 290-amino-acid polypeptide reads, in one-letter code: Cell division protein ZipA (290 aa).

Met-1 is a topological domain (periplasmic). A helical transmembrane segment spans residues 2 to 22 (DIGLREWLIVIGLIVIAGILF). The Cytoplasmic portion of the chain corresponds to 23–290 (DGWRRMRGGK…HERRSLMQKR (268 aa)). Residues 66-143 (REPSFDEQDL…REKAPSVAAA (78 aa)) are disordered. A compositionally biased stretch (basic and acidic residues) spans 81–99 (REGKERKGGKRQDEPRQGD). Acidic residues predominate over residues 100–114 (LDLDEGMALEADPSD).

This sequence belongs to the ZipA family. Interacts with FtsZ via their C-terminal domains.

It localises to the cell inner membrane. Functionally, essential cell division protein that stabilizes the FtsZ protofilaments by cross-linking them and that serves as a cytoplasmic membrane anchor for the Z ring. Also required for the recruitment to the septal ring of downstream cell division proteins. In Pseudomonas paraeruginosa (strain DSM 24068 / PA7) (Pseudomonas aeruginosa (strain PA7)), this protein is Cell division protein ZipA.